The following is a 150-amino-acid chain: Large ribosomal subunit protein bL9 (150 aa).

It belongs to the bacterial ribosomal protein bL9 family.

Its function is as follows. Binds to the 23S rRNA. The chain is Large ribosomal subunit protein bL9 from Streptococcus pneumoniae (strain CGSP14).